Reading from the N-terminus, the 310-residue chain is tRNA dimethylallyltransferase (310 aa).

Glycine 13–threonine 20 contributes to the ATP binding site. Residue threonine 15–threonine 20 participates in substrate binding. Interaction with substrate tRNA stretches follow at residues aspartate 38–leucine 41, glutamine 162–arginine 166, arginine 243–arginine 248, and lysine 276–arginine 283.

It belongs to the IPP transferase family. In terms of assembly, monomer. It depends on Mg(2+) as a cofactor.

The enzyme catalyses adenosine(37) in tRNA + dimethylallyl diphosphate = N(6)-dimethylallyladenosine(37) in tRNA + diphosphate. Catalyzes the transfer of a dimethylallyl group onto the adenine at position 37 in tRNAs that read codons beginning with uridine, leading to the formation of N6-(dimethylallyl)adenosine (i(6)A). The polypeptide is tRNA dimethylallyltransferase (Aliivibrio fischeri (strain MJ11) (Vibrio fischeri)).